Reading from the N-terminus, the 679-residue chain is MEKNFKRTTVTSALPYANGPVHIGHLAGVYVPADIYVRYLRLKKEDVLFIGGSDEHGVPITIRAKKEGITPQDVVDRYHFLIKKSFEEFGISFDVYSRTSSKTHHELASDFFKKLYEKGEFIEKTSEQYYDEEAHQFLADRYITGECPHCHSEGAYGDQCEKCGTSLSPTDLINPKSAISGSKPVMKETKHWYLPLDKHETWLRQWILEEHKEWRPNVYGQCKSWLDMGLQPRAVSRDLDWGIPVPVEGAEGKVLYVWFDAPIGYISNTKELLPDSWETWWKDPETRLVHFIGKDNIVFHCIVFPAMLKAEGSYILPDNVPSNEFLNLEGDKISTSRNWAVWLHEYLEDFPGKQDVLRYVLTANAPETKDNDFTWKDFQARNNNELVAVYGNFVNRAMVLTQKYFEGKVPAAGELTDYDKETLKEFSDVKAEVEKLLNVFKFRDAQKEAMNLARIGNKYLADTEPWKLAKTDMERVGTILNISLQLVANLAIAFEPFLPFSSERLRQMLNMDSFDWAELGRNDLLPAGHQLNKPELLFEKIEDATIEAQVQKLLDTKKANEEANYKAKPIRANIEFDDFMKLDIRVGTVLECQKVPKADKLLQFKIDDGLETRTIVSGIAQHYKPEELVGKQVCFIANLAPRKLKGIVSEGMILSAENNDGSLAVVMPGREVKPGSEVK.

Cysteine 147, cysteine 150, cysteine 160, and cysteine 163 together coordinate Zn(2+). Residues 332–336 (KISTS) carry the 'KMSKS' region motif. Threonine 335 serves as a coordination point for ATP. Residues 578-679 (DFMKLDIRVG…REVKPGSEVK (102 aa)) form the tRNA-binding domain.

The protein belongs to the class-I aminoacyl-tRNA synthetase family. MetG type 1 subfamily. In terms of assembly, homodimer. Requires Zn(2+) as cofactor.

The protein resides in the cytoplasm. It carries out the reaction tRNA(Met) + L-methionine + ATP = L-methionyl-tRNA(Met) + AMP + diphosphate. Its function is as follows. Is required not only for elongation of protein synthesis but also for the initiation of all mRNA translation through initiator tRNA(fMet) aminoacylation. In Bacteroides fragilis (strain YCH46), this protein is Methionine--tRNA ligase.